A 236-amino-acid chain; its full sequence is Small ribosomal subunit protein uS2c (236 aa).

It belongs to the universal ribosomal protein uS2 family.

The protein resides in the plastid. It is found in the chloroplast. The protein is Small ribosomal subunit protein uS2c (rps2) of Barbarea verna (Land cress).